Consider the following 376-residue polypeptide: Chaperone protein DnaJ (376 aa).

A J domain is found at 5–70; that stretch reads DYYEVLGLSK…QKKANYDQFG (66 aa). The CR-type zinc finger occupies 133–215; the sequence is GVEKEISITR…CHGKGTVRKN (83 aa). Residues cysteine 146, cysteine 149, cysteine 163, cysteine 166, cysteine 189, cysteine 192, cysteine 203, and cysteine 206 each contribute to the Zn(2+) site. CXXCXGXG motif repeat units lie at residues 146-153, 163-170, 189-196, and 203-210; these read CDTCAGSG, CDKCGGTG, CDKCGGSG, and CTTCHGKG.

The protein belongs to the DnaJ family. As to quaternary structure, homodimer. It depends on Zn(2+) as a cofactor.

Its subcellular location is the cytoplasm. Its function is as follows. Participates actively in the response to hyperosmotic and heat shock by preventing the aggregation of stress-denatured proteins and by disaggregating proteins, also in an autonomous, DnaK-independent fashion. Unfolded proteins bind initially to DnaJ; upon interaction with the DnaJ-bound protein, DnaK hydrolyzes its bound ATP, resulting in the formation of a stable complex. GrpE releases ADP from DnaK; ATP binding to DnaK triggers the release of the substrate protein, thus completing the reaction cycle. Several rounds of ATP-dependent interactions between DnaJ, DnaK and GrpE are required for fully efficient folding. Also involved, together with DnaK and GrpE, in the DNA replication of plasmids through activation of initiation proteins. The chain is Chaperone protein DnaJ from Clostridium novyi (strain NT).